A 241-amino-acid polypeptide reads, in one-letter code: 2,3,4,5-tetrahydropyridine-2,6-dicarboxylate N-acetyltransferase (241 aa).

This sequence belongs to the transferase hexapeptide repeat family. DapH subfamily.

It carries out the reaction (S)-2,3,4,5-tetrahydrodipicolinate + acetyl-CoA + H2O = L-2-acetamido-6-oxoheptanedioate + CoA. The protein operates within amino-acid biosynthesis; L-lysine biosynthesis via DAP pathway; LL-2,6-diaminopimelate from (S)-tetrahydrodipicolinate (acetylase route): step 1/3. Its function is as follows. Catalyzes the transfer of an acetyl group from acetyl-CoA to tetrahydrodipicolinate. The chain is 2,3,4,5-tetrahydropyridine-2,6-dicarboxylate N-acetyltransferase from Thermoanaerobacter pseudethanolicus (strain ATCC 33223 / 39E) (Clostridium thermohydrosulfuricum).